Consider the following 308-residue polypeptide: Cytochrome b (308 aa).

A run of 4 helical transmembrane segments spans residues 1–21 (FGSL…LLAT), 45–66 (WLIR…YLHI), 81–101 (WNTG…GYVL), and 146–166 (FFAL…IHFT). His65 lines the heme b pocket. Residues His150 and His164 each contribute to the heme b site. A ubiquinone is bound at residue His169. A run of 3 helical transmembrane segments spans residues 194 to 214 (VKDI…ALFS), 256 to 276 (LGGV…PFLH), and 288 to 308 (LSQF…WVGS).

This sequence belongs to the cytochrome b family. In terms of assembly, the cytochrome bc1 complex contains 11 subunits: 3 respiratory subunits (MT-CYB, CYC1 and UQCRFS1), 2 core proteins (UQCRC1 and UQCRC2) and 6 low-molecular weight proteins (UQCRH/QCR6, UQCRB/QCR7, UQCRQ/QCR8, UQCR10/QCR9, UQCR11/QCR10 and a cleavage product of UQCRFS1). This cytochrome bc1 complex then forms a dimer. Heme b is required as a cofactor.

It is found in the mitochondrion inner membrane. Functionally, component of the ubiquinol-cytochrome c reductase complex (complex III or cytochrome b-c1 complex) that is part of the mitochondrial respiratory chain. The b-c1 complex mediates electron transfer from ubiquinol to cytochrome c. Contributes to the generation of a proton gradient across the mitochondrial membrane that is then used for ATP synthesis. The protein is Cytochrome b (MT-CYB) of Colaptes rupicola (Southern Andean flicker).